A 391-amino-acid polypeptide reads, in one-letter code: Glycerol-3-phosphate dehydrogenase [NAD(+)] 1 (391 aa).

NAD(+) contacts are provided by residues G41–G46, F129, K152, and A185. K152 provides a ligand contact to substrate. K245 serves as the catalytic Proton acceptor. NAD(+) is bound by residues R310 and Q339. R310–N311 is a substrate binding site.

The protein belongs to the NAD-dependent glycerol-3-phosphate dehydrogenase family.

Its subcellular location is the cytoplasm. It carries out the reaction sn-glycerol 3-phosphate + NAD(+) = dihydroxyacetone phosphate + NADH + H(+). This chain is Glycerol-3-phosphate dehydrogenase [NAD(+)] 1 (GPD1), found in Saccharomyces uvarum (Yeast).